Here is a 300-residue protein sequence, read N- to C-terminus: Protein YIF1B-B (300 aa).

The segment at 1–46 (MNQESSFRAPPKRRVRGSNPNISNPHQLFDDTSGGPVPHGGDFPNH) is disordered. Residues 1-142 (MNQESSFRAP…APRFDINAPD (142 aa)) lie on the Cytoplasmic side of the membrane. Residues 143-163 (LYIPVMAFITYILVAGLALGT) traverse the membrane as a helical segment. Residues 164 to 178 (QSRFSPEILGMQASS) are Extracellular-facing. A helical membrane pass occupies residues 179–199 (ALAWLIVEVLAILLSLYLVTV). At 200–205 (NTDLTT) the chain is on the cytoplasmic side. A helical membrane pass occupies residues 206–226 (VDLVAFSGYKYVGMISGVIAG). A topological domain (extracellular) is located at residue Leu-227. Residues 228–248 (LFGNTGYYVVLAWCCISIVFF) traverse the membrane as a helical segment. The Cytoplasmic portion of the chain corresponds to 249 to 278 (MIRTLRLKILSEAAAEGVLVRGARNQLRMY). Residues 279–299 (LTMAIAAVQPIFMYWLTYHLV) form a helical membrane-spanning segment. Arg-300 is a topological domain (extracellular).

Belongs to the YIF1 family.

The protein localises to the endoplasmic reticulum membrane. It is found in the golgi apparatus membrane. It localises to the endoplasmic reticulum-Golgi intermediate compartment membrane. Functions in endoplasmic reticulum to Golgi vesicle-mediated transport and regulates the proper organization of the endoplasmic reticulum and the Golgi. Plays a key role in targeting to neuronal dendrites receptors such as HTR1A. Plays also a role in primary cilium and sperm flagellum assembly probably through protein transport to these compartments. In Xenopus laevis (African clawed frog), this protein is Protein YIF1B-B (yif1b-b).